Here is a 383-residue protein sequence, read N- to C-terminus: Inactive serine protease 54 (383 aa).

A signal peptide spans 1–20 (MAEMRGMLLMLLYISHSSSA). The region spanning 21–258 (ICGIQKATIA…YSDWITAKTR (238 aa)) is the Peptidase S1 domain. Asparagine 113 carries N-linked (GlcNAc...) asparagine glycosylation. Cystine bridges form between cysteine 154-cysteine 216, cysteine 185-cysteine 195, and cysteine 206-cysteine 237. The tract at residues 305–334 (QGQRMSTKSNKQKDAGQNFRVNRQPETSGP) is disordered. The span at 323–334 (FRVNRQPETSGP) shows a compositional bias: polar residues.

It belongs to the peptidase S1 family. Plasma kallikrein subfamily.

The protein resides in the secreted. This chain is Inactive serine protease 54 (Prss54), found in Mus musculus (Mouse).